Here is a 184-residue protein sequence, read N- to C-terminus: MEGKIKIGPVGTDYSGKKTMVDWDEGSHNGIISQIFLSHGPTGVFSIQFQFMLDDTFFLSSCHGQNTGSMFDVILLNCPHEYITGISGEYLKSDGASGPQIRSLAFATNLNQYGPFGGSSSQSSIWNHEQQFRFKLGKFRQFSGFYGTYNASGLQNIGVYLQPTIVKPTGTRNAEETESNIVLG.

The Jacalin-type lectin domain maps to 4 to 163; that stretch reads KIKIGPVGTD…LQNIGVYLQP (160 aa).

This sequence belongs to the jacalin lectin family.

The chain is Jacalin-related lectin 2 (JAL2) from Arabidopsis thaliana (Mouse-ear cress).